The following is a 508-amino-acid chain: 3-octaprenyl-4-hydroxybenzoate carboxy-lyase (508 aa).

Residue asparagine 172 coordinates Mn(2+). Prenylated FMN-binding positions include isoleucine 175–arginine 177, arginine 189–leucine 191, and arginine 194–glycine 195. Glutamate 238 provides a ligand contact to Mn(2+). Aspartate 287 functions as the Proton donor in the catalytic mechanism. Positions glycine 483–valine 508 are disordered. The segment covering proline 498 to valine 508 has biased composition (basic and acidic residues).

This sequence belongs to the UbiD family. In terms of assembly, homohexamer. The cofactor is prenylated FMN. Requires Mn(2+) as cofactor.

Its subcellular location is the cell membrane. The catalysed reaction is a 4-hydroxy-3-(all-trans-polyprenyl)benzoate + H(+) = a 2-(all-trans-polyprenyl)phenol + CO2. Its pathway is cofactor biosynthesis; ubiquinone biosynthesis. Its function is as follows. Catalyzes the decarboxylation of 3-octaprenyl-4-hydroxy benzoate to 2-octaprenylphenol, an intermediate step in ubiquinone biosynthesis. This is 3-octaprenyl-4-hydroxybenzoate carboxy-lyase from Chromohalobacter salexigens (strain ATCC BAA-138 / DSM 3043 / CIP 106854 / NCIMB 13768 / 1H11).